Reading from the N-terminus, the 379-residue chain is ATP-sensitive inward rectifier potassium channel 10 (379 aa).

Topologically, residues 1 to 61 (MTSVAKVYYS…LKDLWTTFID (61 aa)) are cytoplasmic. 1,2-dioctanoyl-sn-glycero-3-phospho-(1D-myo-inositol-4,5-bisphosphate) is bound at residue Arg-36. A helical transmembrane segment spans residues 62–88 (MQWRYKLLLFSATFAGTWFLFGVVWYL). At 89 to 114 (VAVAHGDLLELGPPANHTPCVVQVHT) the chain is on the extracellular side. Cys-108 and Cys-140 form a disulfide bridge. The segment at residues 115 to 131 (LTGAFLFSLESQTTIGY) is an intramembrane region (discontinuously helical; Pore-forming). Positions 128–133 (TIGYGF) match the Selectivity filter motif. Residues 132–140 (GFRYISEEC) are Extracellular-facing. A helical membrane pass occupies residues 141–166 (PLAIVLLIAQLVLTTILEIFITGTFL). Topologically, residues 167–379 (AKIARPKKRA…SALSVRISNV (213 aa)) are cytoplasmic. The 1,2-dioctanoyl-sn-glycero-3-phospho-(1D-myo-inositol-4,5-bisphosphate) site is built by Lys-168, Arg-171, and Lys-173. Residue 210–217 (GCQVTGKL) participates in ATP binding.

This sequence belongs to the inward rectifier-type potassium channel (TC 1.A.2.1) family. KCNJ10 subfamily. Homotetramer. In kidney cells, it forms heteromeric channels with Kir5.1/KCNJ16; this interaction is required for KCNJ16 localization to the basolateral membrane. Interacts with MAGI1, alone and possibly as a heteromer with KCNJ16; this interaction may facilitate KCNJ10/KCNJ16 potassium channel expression at the basolateral membrane in kidney cells. Interacts with PATJ. As to expression, predominantly expressed in the brain, including in glial cells of the cerebellum and forebrain. Expressed at lower levels in the kidney, and other peripheral tissues.

It is found in the membrane. The protein resides in the basolateral cell membrane. It catalyses the reaction K(+)(in) = K(+)(out). With respect to regulation, channel activity is strongly regulated by variations of cytosolic pH; channels are activated by alkaline and inhibited by acidic pH values. Activated by phosphatidylinositol 4,5 biphosphate (PtdIns(4,5)P2). Inhibited by Ba(2+) and Cs(+). May be responsible for potassium buffering action of glial cells in the brain. Inward rectifier potassium channels are characterized by a greater tendency to allow potassium to flow into the cell rather than out of it. Their voltage dependence is regulated by the concentration of extracellular potassium; as external potassium is raised, the voltage range of the channel opening shifts to more positive voltages. The inward rectification is mainly due to the blockage of outward current by internal magnesium. Can be blocked by extracellular barium and cesium. In the kidney, together with KCNJ16, mediates basolateral K(+) recycling in distal tubules; this process is critical for Na(+) reabsorption at the tubules. The sequence is that of ATP-sensitive inward rectifier potassium channel 10 from Rattus norvegicus (Rat).